Reading from the N-terminus, the 366-residue chain is MAP kinase-activated protein kinase 2 (366 aa).

The Protein kinase domain occupies 30 to 291; it reads KVTSQVLGLG…ITEFMNHPWI (262 aa). ATP contacts are provided by residues 36–44 and lysine 59; that span reads LGLGINGKV. 105 to 107 is a binding site for staurosporine; the sequence is ECL. Aspartate 152 functions as the Proton acceptor in the catalytic mechanism. Threonine 188 is modified (phosphothreonine; by MAPK14). Serine 238 bears the Phosphoserine; by MAPK14 mark. Serine 294 carries the post-translational modification Phosphoserine; by autocatalysis. The tract at residues 294–330 is autoinhibitory helix; it reads STKVPQTPLHTSRVLKEDKERWEDVKEEMTSALATMR. The residue at position 300 (threonine 300) is a Phosphothreonine; by MAPK14. Residue lysine 319 forms a Glycyl lysine isopeptide (Lys-Gly) (interchain with G-Cter in SUMO) linkage. The short motif at 322–331 is the Nuclear export signal (NES) element; that stretch reads MTSALATMRV. Residues 332 to 356 form a p38 MAPK-binding site region; sequence DYEQIKIKKIEDASNPLLLKRRKKA. 2 short sequence motifs (bipartite nuclear localization signal) span residues 337 to 340 and 351 to 355; these read KIKK and KRRKK.

This sequence belongs to the protein kinase superfamily. CAMK Ser/Thr protein kinase family. As to quaternary structure, heterodimer with p38-alpha/MAPK14; this heterodimer forms a stable complex: molecules are positioned 'face to face' so that the ATP-binding sites of both kinases are at the heterodimer interface. Interacts with PHC2. Interacts with HSF1. In terms of processing, sumoylation inhibits the protein kinase activity. Phosphorylated and activated by MAP kinase p38-alpha/MAPK14 at Thr-188, Ser-238 and Thr-300.

The protein localises to the cytoplasm. Its subcellular location is the nucleus. The catalysed reaction is L-seryl-[protein] + ATP = O-phospho-L-seryl-[protein] + ADP + H(+). It carries out the reaction L-threonyl-[protein] + ATP = O-phospho-L-threonyl-[protein] + ADP + H(+). Activated following phosphorylation by p38-alpha/MAPK14 following various stresses. Inhibited following sumoylation. Specifically inhibited by pyrrolopyridine inhibitors. In terms of biological role, stress-activated serine/threonine-protein kinase involved in cytokine production, endocytosis, reorganization of the cytoskeleton, cell migration, cell cycle control, chromatin remodeling, DNA damage response and transcriptional regulation. Following stress, it is phosphorylated and activated by MAP kinase p38-alpha/MAPK14, leading to phosphorylation of substrates. Phosphorylates serine in the peptide sequence, Hyd-X-R-X(2)-S, where Hyd is a large hydrophobic residue. Phosphorylates ALOX5, CDC25B, CDC25C, CEP131, ELAVL1, HNRNPA0, HSP27/HSPB1, KRT18, KRT20, LIMK1, LSP1, PABPC1, PARN, PDE4A, RCSD1, RPS6KA3, TAB3 and TTP/ZFP36. Phosphorylates HSF1; leading to the interaction with HSP90 proteins and inhibiting HSF1 homotrimerization, DNA-binding and transactivation activities. Mediates phosphorylation of HSP27/HSPB1 in response to stress, leading to dissociation of HSP27/HSPB1 from large small heat-shock protein (sHsps) oligomers and impairment of their chaperone activities and ability to protect against oxidative stress effectively. Involved in inflammatory response by regulating tumor necrosis factor (TNF) and IL6 production post-transcriptionally: acts by phosphorylating AU-rich elements (AREs)-binding proteins ELAVL1, HNRNPA0, PABPC1 and TTP/ZFP36, leading to regulate the stability and translation of TNF and IL6 mRNAs. Phosphorylation of TTP/ZFP36, a major post-transcriptional regulator of TNF, promotes its binding to 14-3-3 proteins and reduces its ARE mRNA affinity leading to inhibition of dependent degradation of ARE-containing transcripts. Phosphorylates CEP131 in response to cellular stress following ultraviolet irradiation which promotes binding of CEP131 to 14-3-3 proteins and inhibits formation of novel centriolar satellites. Also involved in late G2/M checkpoint following DNA damage through a process of post-transcriptional mRNA stabilization: following DNA damage, relocalizes from nucleus to cytoplasm and phosphorylates HNRNPA0 and PARN, leading to stabilization of GADD45A mRNA. Involved in toll-like receptor signaling pathway (TLR) in dendritic cells: required for acute TLR-induced macropinocytosis by phosphorylating and activating RPS6KA3. In Oryctolagus cuniculus (Rabbit), this protein is MAP kinase-activated protein kinase 2 (MAPKAPK2).